Reading from the N-terminus, the 782-residue chain is Anoctamin-9 (782 aa).

The Cytoplasmic segment spans residues 1 to 198 (MQGEESLRIL…LYFVWLGWYT (198 aa)). A helical membrane pass occupies residues 199–219 (YMLVPAALTGLLVFLSGFSLF). Residues 220–264 (EASQISKEICEAHDILMCPLGDHSRRYQRLSETCTFAKLTHLFDN) lie on the Extracellular side of the membrane. At S250 the chain carries Phosphoserine; by PKA. Residues 265–285 (DGTVVFAIFMALWATVFLEIW) traverse the membrane as a helical segment. At 286 to 331 (KRQRARVVLHWDLYVWDEEQEEMALQLINCPDYKLRPYQHSYLRST) the chain is on the cytoplasmic side. Residues 332–352 (VILVLTLLMICLMIGMAHVLV) form a helical membrane-spanning segment. The Extracellular segment spans residues 353 to 373 (VYRVLASALFSSSAVPFLEEQ). A helical transmembrane segment spans residues 374–394 (VTTAVVVTGALVHYVTIIIMT). The Cytoplasmic portion of the chain corresponds to 395–423 (KINRCVALKLCDFEMPRTFSERESRFTIR). Residues 424–444 (FFTLQFFTHFSSLIYIAFILG) traverse the membrane as a helical segment. The Extracellular portion of the chain corresponds to 445-552 (RINGHPGKST…EMMIQYGFTT (108 aa)). The chain crosses the membrane as a helical span at residues 553–573 (IFVAAFPLAPLLALFSNLVEI). Residues 574–604 (RLDAIKMVWLQRRLVPRKAKDIGTWLQVLET) lie on the Cytoplasmic side of the membrane. The chain crosses the membrane as a helical span at residues 605–625 (IGVLAVIANGMVIAFTSEFIP). Residues 626-703 (RVVYKYRYSP…QFWFLLAIRL (78 aa)) lie on the Extracellular side of the membrane. N-linked (GlcNAc...) asparagine glycosylation is found at N641, N652, N674, and N690. Residues 704–724 (AFVILFEHVALCIKLIAAWFV) traverse the membrane as a helical segment. Topologically, residues 725-782 (PDIPQSVKNKVLEVKYQRLREKMWHGRQRLGGVGAGSRPPMPAHPTPASIFSARSTDV) are cytoplasmic. The tract at residues 756 to 782 (GVGAGSRPPMPAHPTPASIFSARSTDV) is disordered.

It belongs to the anoctamin family. Phosphorylated on serine residues by cAMP-dependent protein kinase A (PKA) which is essential for activation of its cation channel activity. Expressed in the kidney. Expressed in the olfactory epithelium.

It is found in the cell membrane. It localises to the endoplasmic reticulum. The catalysed reaction is a 1,2-diacyl-sn-glycero-3-phospho-L-serine(in) = a 1,2-diacyl-sn-glycero-3-phospho-L-serine(out). It catalyses the reaction a beta-D-galactosyl-(1&lt;-&gt;1')-N-acylsphing-4-enine(out) = a beta-D-galactosyl-(1&lt;-&gt;1')-N-acylsphing-4-enine(in). It carries out the reaction a 1,2-diacyl-sn-glycero-3-phosphocholine(in) = a 1,2-diacyl-sn-glycero-3-phosphocholine(out). The enzyme catalyses Ca(2+)(in) = Ca(2+)(out). The catalysed reaction is Na(+)(in) = Na(+)(out). It catalyses the reaction K(+)(in) = K(+)(out). Cation channel activity is activated via phosphorylation on serine residues by cAMP-dependent protein kinase A (PKA). Its function is as follows. PKA-activated nonselective cation channel. Discriminates poorly among cations but is more permeable to Ca(2+) ions than to monovalent cations. Acts as a calcium-activated calcium permeable channel which may operate as a endoplasmic reticulum (ER) Ca(2+)-leak channel, reducing the loading of the ER Ca(2+) store. Regulates intracellular Ca2+ signals, ion channel activity, and cytokine release in the renal tissue. Plays an important role in olfaction, amplifying cAMP-evoked cyclic nucleotide-gated (CNG) channel currents in the olfactory sensory neurons. Has calcium-dependent phospholipid scramblase activity; scrambles phosphatidylserine, phosphatidylcholine and galactosylceramide. Does not exhibit calcium-activated chloride channel (CaCC) activity. Can inhibit the activity of ANO1. This is Anoctamin-9 (ANO9) from Homo sapiens (Human).